Consider the following 64-residue polypeptide: DNA-directed RNA polymerase subunit Rpo10 (64 aa).

Zn(2+) contacts are provided by C7, C10, C45, and C46.

This sequence belongs to the archaeal Rpo10/eukaryotic RPB10 RNA polymerase subunit family. In terms of assembly, part of the RNA polymerase complex. The cofactor is Zn(2+).

It is found in the cytoplasm. The catalysed reaction is RNA(n) + a ribonucleoside 5'-triphosphate = RNA(n+1) + diphosphate. Its function is as follows. DNA-dependent RNA polymerase (RNAP) catalyzes the transcription of DNA into RNA using the four ribonucleoside triphosphates as substrates. This chain is DNA-directed RNA polymerase subunit Rpo10, found in Halorubrum lacusprofundi (strain ATCC 49239 / DSM 5036 / JCM 8891 / ACAM 34).